The chain runs to 156 residues: Extracellular giant hemoglobin major globin subunit A1 (156 aa).

A signal peptide spans 1-16; that stretch reads MKVLIIFACLVVMASA. Residues 17–156 enclose the Globin domain; sequence VCNRLEQILV…YERIASGISG (140 aa). An intrachain disulfide couples cysteine 18 to cysteine 146. A hydrogen sulfide-binding site is contributed by cysteine 79. Residue histidine 110 coordinates heme b.

It belongs to the globin family. As to quaternary structure, the 400 kDa hemoglobin consists of a spherical 24-mer arranged as a double layer of dome-shaped dodecamers. Each dodecamer is composed of the 3-fold trimer of the tetramer A1-A2-B1-B2 having one intra-tetramer (A1-B2) disulfide bond and one inter-tetramer (B1-B2) disulfide bond per tetramer.

The protein localises to the secreted. Its function is as follows. The extracellular giant hemoglobin is able to bind and transport oxygen and hydrosulfide simultaneously and reversibly at two different sites. This chain is Extracellular giant hemoglobin major globin subunit A1 (ghbA1), found in Oligobrachia mashikoi (Beard worm).